The sequence spans 408 residues: Chaperone protein dnaJ 1, mitochondrial (408 aa).

The N-terminal 26 residues, 1-26 (MRRFNWVLRHVQARRTFDSAIGLRQG), are a transit peptide targeting the mitochondrion. Residues 48 to 113 (NYYDVLGVSP…ERREEYDKLQ (66 aa)) enclose the J domain. The segment at 173-247 (GCTKRLSFDA…CRGSGIVEGT (75 aa)) adopts a CR-type zinc-finger fold. Zn(2+) is bound by residues C186, C189, C203, C206, C221, C224, C235, and C238. CXXCXGXG motif repeat units lie at residues 186 to 193 (CDSCDGLG), 203 to 210 (CPTCRGVG), 221 to 228 (CQTCKGTG), and 235 to 242 (CMSCRGSG).

It belongs to the DnaJ family. B/II subfamily. Homodimer. Zn(2+) serves as cofactor. In terms of tissue distribution, ubiquitous.

Its subcellular location is the mitochondrion. Plays a continuous role in plant development probably in the structural organization of compartments. The sequence is that of Chaperone protein dnaJ 1, mitochondrial (ATJ1) from Arabidopsis thaliana (Mouse-ear cress).